A 92-amino-acid chain; its full sequence is MQITDVRIRKISSEGKMKAIVSVTFDNEFVVHDIKVIEGQNGLFIAMPSRKTPTGEFKDIAHPIVMDSREKIQNEILSAYAKAIEEQDVEEE.

The protein belongs to the SpoVG family.

Could be involved in septation. This Clostridium botulinum (strain Eklund 17B / Type B) protein is Putative septation protein SpoVG.